Consider the following 523-residue polypeptide: BTB/POZ domain-containing protein 3 (523 aa).

Residues 85–114 (FDYSPLVLASLCGHEPVVKFLLENGALCER) form an ANK repeat. BTB domains lie at 167–223 (TDIV…RYLY) and 306–373 (HDAY…DIAP).

As to quaternary structure, interacts with cul3. In terms of processing, ubiquitinated and targeted for cul3-dependent degradation.

It localises to the cytoplasm. It functions in the pathway protein modification; protein ubiquitination. Its function is as follows. Probable substrate-specific adapter of an E3 ubiquitin-protein ligase complex which mediates the ubiquitination and subsequent proteasomal degradation of target proteins. The polypeptide is BTB/POZ domain-containing protein 3 (btb3) (Schizosaccharomyces pombe (strain 972 / ATCC 24843) (Fission yeast)).